Reading from the N-terminus, the 378-residue chain is Chaperone protein DnaJ (378 aa).

The J domain occupies 5–70 (DYYEVLGVAK…QKRAAYDQYG (66 aa)). Residues 138-216 (GYDTQIRVPS…CHGSGKVKET (79 aa)) form a CR-type zinc finger. Residues Cys-151, Cys-154, Cys-168, Cys-171, Cys-190, Cys-193, Cys-204, and Cys-207 each contribute to the Zn(2+) site. CXXCXGXG motif repeat units lie at residues 151 to 158 (CEVCHGSG), 168 to 175 (CPTCHGQG), 190 to 197 (CPKCHGTG), and 204 to 211 (CVHCHGSG).

This sequence belongs to the DnaJ family. In terms of assembly, homodimer. Requires Zn(2+) as cofactor.

It localises to the cytoplasm. Functionally, participates actively in the response to hyperosmotic and heat shock by preventing the aggregation of stress-denatured proteins and by disaggregating proteins, also in an autonomous, DnaK-independent fashion. Unfolded proteins bind initially to DnaJ; upon interaction with the DnaJ-bound protein, DnaK hydrolyzes its bound ATP, resulting in the formation of a stable complex. GrpE releases ADP from DnaK; ATP binding to DnaK triggers the release of the substrate protein, thus completing the reaction cycle. Several rounds of ATP-dependent interactions between DnaJ, DnaK and GrpE are required for fully efficient folding. Also involved, together with DnaK and GrpE, in the DNA replication of plasmids through activation of initiation proteins. This chain is Chaperone protein DnaJ, found in Burkholderia ambifaria (strain MC40-6).